The chain runs to 227 residues: MSVLHNDWAPIVEEEYEKTYYLKLKQFLMEEYRTKTVYPDEGDIFNALQLTPFGKVKAVILGQDPYHGPGQAHGLSFSVKPGVKTPPSLKNIFKELNGDLGYDIPEHGYLNQWAQEGVLMLNTVLTVRRGEPNSHKGAGWEQFTDQIIKRLNERETAMVFILWGKNAQEKEALITNPQHHIIKSPHPSPFSAHRGFFGSHPFSKTNDFLRGVGIEEINWNIEKSSDL.

The active-site Proton acceptor is the Asp-64.

The protein belongs to the uracil-DNA glycosylase (UDG) superfamily. UNG family.

It localises to the cytoplasm. It carries out the reaction Hydrolyzes single-stranded DNA or mismatched double-stranded DNA and polynucleotides, releasing free uracil.. In terms of biological role, excises uracil residues from the DNA which can arise as a result of misincorporation of dUMP residues by DNA polymerase or due to deamination of cytosine. This is Uracil-DNA glycosylase from Alkaliphilus metalliredigens (strain QYMF).